The chain runs to 230 residues: Large ribosomal subunit protein uL1 (230 aa).

The protein belongs to the universal ribosomal protein uL1 family. Part of the 50S ribosomal subunit.

In terms of biological role, binds directly to 23S rRNA. The L1 stalk is quite mobile in the ribosome, and is involved in E site tRNA release. Its function is as follows. Protein L1 is also a translational repressor protein, it controls the translation of the L11 operon by binding to its mRNA. In Nitrobacter hamburgensis (strain DSM 10229 / NCIMB 13809 / X14), this protein is Large ribosomal subunit protein uL1.